Here is a 234-residue protein sequence, read N- to C-terminus: Large ribosomal subunit protein uL1 (234 aa).

The protein belongs to the universal ribosomal protein uL1 family. Part of the 50S ribosomal subunit.

Binds directly to 23S rRNA. The L1 stalk is quite mobile in the ribosome, and is involved in E site tRNA release. In terms of biological role, protein L1 is also a translational repressor protein, it controls the translation of the L11 operon by binding to its mRNA. The sequence is that of Large ribosomal subunit protein uL1 from Aliivibrio fischeri (strain MJ11) (Vibrio fischeri).